Consider the following 61-residue polypeptide: Small ribosomal subunit protein uS14 (61 aa).

Residues C24, C27, C40, and C43 each contribute to the Zn(2+) site.

It belongs to the universal ribosomal protein uS14 family. Zinc-binding uS14 subfamily. As to quaternary structure, part of the 30S ribosomal subunit. Contacts proteins S3 and S10. Zn(2+) is required as a cofactor.

Its function is as follows. Binds 16S rRNA, required for the assembly of 30S particles and may also be responsible for determining the conformation of the 16S rRNA at the A site. The protein is Small ribosomal subunit protein uS14 of Mycoplasma mobile (strain ATCC 43663 / 163K / NCTC 11711) (Mesomycoplasma mobile).